The sequence spans 158 residues: Leptin-B (158 aa).

The N-terminal stretch at 1 to 19 (MYMPLALVYASFLTLPAST) is a signal peptide. A disulfide bond links Cys114 and Cys158.

This sequence belongs to the leptin family. As to expression, highly expressed in the brain and eye. Expressed at low levels in muscle and skin.

The protein resides in the secreted. Its function is as follows. May function as part of a signaling pathway that acts to regulate the size of the body fat depot. In Oryzias latipes (Japanese rice fish), this protein is Leptin-B.